Consider the following 251-residue polypeptide: Probable transcriptional regulatory protein Swol_1435 (251 aa).

The tract at residues 1-23 is disordered; it reads MAGHSKWANIKHKKARSDEKRGK.

It belongs to the TACO1 family.

It is found in the cytoplasm. The sequence is that of Probable transcriptional regulatory protein Swol_1435 from Syntrophomonas wolfei subsp. wolfei (strain DSM 2245B / Goettingen).